The sequence spans 102 residues: Large ribosomal subunit protein bL21 (102 aa).

It belongs to the bacterial ribosomal protein bL21 family. In terms of assembly, part of the 50S ribosomal subunit. Contacts protein L20.

Functionally, this protein binds to 23S rRNA in the presence of protein L20. The protein is Large ribosomal subunit protein bL21 of Geotalea uraniireducens (strain Rf4) (Geobacter uraniireducens).